We begin with the raw amino-acid sequence, 853 residues long: DNA mismatch repair protein MutS (853 aa).

614–621 (GPNMGGKS) lines the ATP pocket.

Belongs to the DNA mismatch repair MutS family.

This protein is involved in the repair of mismatches in DNA. It is possible that it carries out the mismatch recognition step. This protein has a weak ATPase activity. The sequence is that of DNA mismatch repair protein MutS from Citrobacter koseri (strain ATCC BAA-895 / CDC 4225-83 / SGSC4696).